Reading from the N-terminus, the 296-residue chain is Giardin subunit alpha-2 (296 aa).

Annexin repeat units lie at residues 2 to 71 (PKLS…MDLF), 73 to 143 (DRHE…MEKW), 153 to 223 (GSPD…AHFA), and 226 to 293 (GMHK…TLWR).

This sequence belongs to the annexin family. Giardin subunit alpha subfamily.

It localises to the cytoplasm. Its subcellular location is the cytoskeleton. Giardins are involved in parasite attachment to the intestinal mucosa and in the cytoskeletal disassembly and reassembly that marks the transition from infectious trophozoite to transmissible cyst. They may interact with other cytoskeletal proteins such as microtubules in the microribbons or crossbridges, to maintain the integrity of the ventral disk. This is Giardin subunit alpha-2 from Giardia intestinalis (Giardia lamblia).